The primary structure comprises 160 residues: Small ribosomal subunit protein uS7 (160 aa).

The protein belongs to the universal ribosomal protein uS7 family. In terms of assembly, part of the 30S ribosomal subunit. Contacts proteins S9 and S11.

Its function is as follows. One of the primary rRNA binding proteins, it binds directly to 16S rRNA where it nucleates assembly of the head domain of the 30S subunit. Is located at the subunit interface close to the decoding center, probably blocks exit of the E-site tRNA. The sequence is that of Small ribosomal subunit protein uS7 from Ehrlichia chaffeensis (strain ATCC CRL-10679 / Arkansas).